The sequence spans 270 residues: tRNA pseudouridine synthase A (270 aa).

D51 acts as the Nucleophile in catalysis. Y109 contributes to the substrate binding site.

Belongs to the tRNA pseudouridine synthase TruA family. In terms of assembly, homodimer.

It carries out the reaction uridine(38/39/40) in tRNA = pseudouridine(38/39/40) in tRNA. Functionally, formation of pseudouridine at positions 38, 39 and 40 in the anticodon stem and loop of transfer RNAs. The sequence is that of tRNA pseudouridine synthase A from Burkholderia ambifaria (strain ATCC BAA-244 / DSM 16087 / CCUG 44356 / LMG 19182 / AMMD) (Burkholderia cepacia (strain AMMD)).